The sequence spans 234 residues: UPF0758 protein Rfer_3252 (234 aa).

The 123-residue stretch at 112 to 234 folds into the MPN domain; the sequence is IFATPDAVKH…ALSMAERGLL (123 aa). The Zn(2+) site is built by His183, His185, and Asp196. The JAMM motif signature appears at 183–196; it reads HNHPSGTVQPSRAD.

The protein belongs to the UPF0758 family.

The protein is UPF0758 protein Rfer_3252 of Albidiferax ferrireducens (strain ATCC BAA-621 / DSM 15236 / T118) (Rhodoferax ferrireducens).